The following is a 269-amino-acid chain: Hydroxypyruvate/pyruvate aldolase (269 aa).

His48 (proton acceptor) is an active-site residue. 2 residues coordinate a divalent metal cation: Glu152 and Asp178.

The protein belongs to the HpcH/HpaI aldolase family. A divalent metal cation is required as a cofactor.

It carries out the reaction D-glyceraldehyde + pyruvate = 2-dehydro-3-deoxy-L-galactonate. Its function is as follows. Aldolase which can catalyze in vitro the aldolisation reaction between hydroxypyruvate (HPA) or pyruvate (PA) and D-glyceraldehyde (D-GA). The condensation of pyruvate and D-glyceraldehyde produces 2-dehydro-3-deoxy-L-galactonate as the major product. Has weak activity with hydroxypyruvate and D-glyceraldehyde. In Delftia acidovorans (strain DSM 14801 / SPH-1), this protein is Hydroxypyruvate/pyruvate aldolase.